We begin with the raw amino-acid sequence, 506 residues long: Chorion-specific transcription factor GCMb (506 aa).

Residues 19–174 (LSWDINDPQM…KSETEARRSA (156 aa)) constitute a DNA-binding region (GCM). Positions 81, 87, 91, 118, 121, 130, 157, and 159 each coordinate Zn(2+). A compositionally biased stretch (basic and acidic residues) spans 155 to 172 (GVHDHPRPESKSETEARR). The interval 155 to 213 (GVHDHPRPESKSETEARRSAIKRQMASFYQPQKKRIRESEAEENQDSSGHFSNIPPLEN) is disordered. A C-terminal conserved inhibitory domain (CCID) region spans residues 379–395 (LQTVITTTTKVSYQAYQ).

The protein resides in the nucleus. Its function is as follows. Transcription factor that binds specific sequences on gene promoters and activate their transcription. Through the regulation of gene transcription, may play a role in parathyroid gland development. The polypeptide is Chorion-specific transcription factor GCMb (Homo sapiens (Human)).